The sequence spans 239 residues: Probable transcriptional regulatory protein MG332 (239 aa).

The protein belongs to the TACO1 family.

It is found in the cytoplasm. This chain is Probable transcriptional regulatory protein MG332, found in Mycoplasma genitalium (strain ATCC 33530 / DSM 19775 / NCTC 10195 / G37) (Mycoplasmoides genitalium).